A 288-amino-acid chain; its full sequence is Cyclin-dependent kinase 2 homolog (288 aa).

The Protein kinase domain occupies 4–284; that stretch reads YHGLEKIGEG…AKQAIEHPYF (281 aa). ATP is bound by residues 10–18 and Lys32; that span reads IGEGTYGVV. A Phosphothreonine modification is found at Thr14. Tyr15 carries the post-translational modification Phosphotyrosine. Asp125 functions as the Proton acceptor in the catalytic mechanism. At Thr158 the chain carries Phosphothreonine.

This sequence belongs to the protein kinase superfamily. CMGC Ser/Thr protein kinase family. CDC2/CDKX subfamily. May form a complex composed of at least the catalytic subunit CRK2 and a cyclin. It depends on Mg(2+) as a cofactor.

The protein localises to the cytoplasm. It carries out the reaction L-seryl-[protein] + ATP = O-phospho-L-seryl-[protein] + ADP + H(+). It catalyses the reaction L-threonyl-[protein] + ATP = O-phospho-L-threonyl-[protein] + ADP + H(+). The enzyme catalyses [DNA-directed RNA polymerase] + ATP = phospho-[DNA-directed RNA polymerase] + ADP + H(+). With respect to regulation, phosphorylation at Thr-14 or Tyr-15 inactivates the enzyme, while phosphorylation at Thr-158 activates it. Its function is as follows. Serine/threonine-protein kinase. Involved in the control of the cell cycle. Required for entry into S-phase and mitosis. Probable component of the kinase complex that phosphorylates the repetitive C-terminus of RNA polymerase II. The sequence is that of Cyclin-dependent kinase 2 homolog from Plasmodium berghei (strain Anka).